We begin with the raw amino-acid sequence, 331 residues long: Beta-ketoacyl-[acyl-carrier-protein] synthase III (331 aa).

Catalysis depends on residues cysteine 113 and histidine 256. Positions 257–261 (QANKR) are ACP-binding. The active site involves asparagine 286.

The protein belongs to the thiolase-like superfamily. FabH family. Homodimer.

The protein localises to the cytoplasm. It carries out the reaction malonyl-[ACP] + acetyl-CoA + H(+) = 3-oxobutanoyl-[ACP] + CO2 + CoA. Its pathway is lipid metabolism; fatty acid biosynthesis. Functionally, catalyzes the condensation reaction of fatty acid synthesis by the addition to an acyl acceptor of two carbons from malonyl-ACP. Catalyzes the first condensation reaction which initiates fatty acid synthesis and may therefore play a role in governing the total rate of fatty acid production. Possesses both acetoacetyl-ACP synthase and acetyl transacylase activities. Its substrate specificity determines the biosynthesis of branched-chain and/or straight-chain of fatty acids. The sequence is that of Beta-ketoacyl-[acyl-carrier-protein] synthase III from Solibacter usitatus (strain Ellin6076).